The following is a 170-amino-acid chain: MQLTTLLTGLISVLSVTTAIPMGSESPTPTSSVSKSLIAHSSSASVSASPTPSPNPYEAYTCPKDKFKACCMSVQQTGKDIVKQLGDLVPVLSGLQVSSAISFQCKNMTEREAPDSCNGQGYTPMCCNTKVEDTGFNTCKPFEDVKKAYYMNNMKDIPESQADMIMDILT.

Residues 1–19 form the signal peptide; it reads MQLTTLLTGLISVLSVTTA. 4 cysteine pairs are disulfide-bonded: Cys-62–Cys-126, Cys-70–Cys-117, Cys-71–Cys-105, and Cys-127–Cys-139.

Belongs to the fungal hydrophobin family.

It localises to the secreted. It is found in the cell wall. Its function is as follows. Aerial growth, conidiation, and dispersal of filamentous fungi in the environment rely upon a capability of their secreting small amphipathic proteins called hydrophobins (HPBs) with low sequence identity. Class I can self-assemble into an outermost layer of rodlet bundles on aerial cell surfaces, conferring cellular hydrophobicity that supports fungal growth, development and dispersal; whereas Class II form highly ordered films at water-air interfaces through intermolecular interactions but contribute nothing to the rodlet structure. In P.expansum, hydrophobins contribute to germination, tolerance to cold stress and mycotoxins patulin and citrinin production. This is Class I hydrophobin E from Penicillium expansum (Blue mold rot fungus).